The primary structure comprises 212 residues: Probable nicotinate-nucleotide adenylyltransferase (212 aa).

It belongs to the NadD family.

The enzyme catalyses nicotinate beta-D-ribonucleotide + ATP + H(+) = deamido-NAD(+) + diphosphate. Its pathway is cofactor biosynthesis; NAD(+) biosynthesis; deamido-NAD(+) from nicotinate D-ribonucleotide: step 1/1. Catalyzes the reversible adenylation of nicotinate mononucleotide (NaMN) to nicotinic acid adenine dinucleotide (NaAD). This chain is Probable nicotinate-nucleotide adenylyltransferase, found in Shewanella sp. (strain MR-4).